The chain runs to 141 residues: Secreted RxLR effector protein 69 (141 aa).

A signal peptide spans Met-1–Gly-19. The short motif at Arg-38 to Arg-53 is the RxLR-dEER element. A glycan (N-linked (GlcNAc...) asparagine) is linked at Asn-120.

The protein belongs to the RxLR effector family.

Its subcellular location is the secreted. The protein resides in the host nucleus. In terms of biological role, secreted effector that completely suppresses the host cell death induced by cell death-inducing proteins. This chain is Secreted RxLR effector protein 69, found in Plasmopara viticola (Downy mildew of grapevine).